Here is a 229-residue protein sequence, read N- to C-terminus: Probable coenzyme A transferase subunit alpha (229 aa).

G26–G32 lines the CoA pocket.

The protein belongs to the 3-oxoacid CoA-transferase subunit A family. In terms of assembly, heterodimer of a subunit alpha and a subunit beta.

This Bacillus subtilis (strain 168) protein is Probable coenzyme A transferase subunit alpha (yodS).